A 735-amino-acid polypeptide reads, in one-letter code: Dolichyl-diphosphooligosaccharide--protein glycosyltransferase subunit STT3B (735 aa).

The Cytoplasmic segment spans residues 1 to 38 (MGGKSEPAKSESMATKPDLLNTSFFSFKSLKLKTKQQE). Residues 39 to 59 (LLLRISILGLVYILAFIARLF) form a helical membrane-spanning segment. The Lumenal segment spans residues 60 to 142 (SVLRYESMIH…VHIREVCVLT (83 aa)). Positions 70 to 72 (EFD) match the DXD motif 1 motif. Asp72 lines the Mn(2+) pocket. The chain crosses the membrane as a helical span at residues 143 to 161 (APFFASNTTLVAYFFGKEL). Residues 162–163 (WD) are Cytoplasmic-facing. The helical transmembrane segment at 164–181 (TGAGLVAAVLIAICPGYI) threads the bilayer. Residues 182–192 (SRSVAGSYDNE) are Lumenal-facing. Mn(2+)-binding residues include Asp190 and Glu192. Residues 190–192 (DNE) carry the DXD motif 2 motif. A helical membrane pass occupies residues 193–212 (AVAIFALLLTFYLFVKAVNT). The Cytoplasmic segment spans residues 213 to 214 (GS). The chain crosses the membrane as a helical span at residues 215-229 (LAWALASAFGYFYMV). The Lumenal portion of the chain corresponds to 230–234 (SAWGG). A helical transmembrane segment spans residues 235–251 (YVFIINLVPLYVLVLLI). At 252–256 (TGRYS) the chain is on the cytoplasmic side. The chain crosses the membrane as a helical span at residues 257–282 (MRLYIAYNCMYILGMLLAMQIRFVGF). Residues 283–290 (QHVQSGEH) are Lumenal-facing. The helical transmembrane segment at 291–310 (MGAMGVFLLMQVFYFLDWVK) threads the bilayer. Topologically, residues 311 to 326 (YQLNDTKLFQTFLRIT) are cytoplasmic. A helical membrane pass occupies residues 327 to 347 (VTSAILVGGVAVGVGTASGYI). Over 348-380 (SPWTGRFYSLLDPTYAKDHIPIIASVSEHQPTA) the chain is Lumenal. The SVSE motif signature appears at 372–375 (SVSE). Residues 381 to 403 (WSSFMFDYHILLFLFPAGLYFCF) traverse the membrane as a helical segment. The Cytoplasmic portion of the chain corresponds to 404-409 (KRLTDA). Residues 410–426 (TIFIVMYGLTSLYFAGV) form a helical membrane-spanning segment. Topologically, residues 427 to 430 (MVRL) are lumenal. Arg429 lines the dolichyl diphosphooligosaccharide pocket. Residues 431–452 (ILVATPAVCLISAIAVSATIKN) form a helical membrane-spanning segment. Over 453–494 (LTSLLRTKQKVSQTGSTKGAGSSKASSKVTLDQSQPFQKNGA) the chain is Cytoplasmic. Residues 495–515 (IALLVGVFYLLSRYAIHCTWV) form a helical membrane-spanning segment. Topologically, residues 516–735 (TAEAYSSPSI…YRVKPPTNRL (220 aa)) are lumenal. Residues 562–564 (WWD) are interacts with target acceptor peptide in protein substrate. Residues 562–566 (WWDYG) carry the WWDYG motif motif. Tyr567 is a binding site for dolichyl diphosphooligosaccharide. N-linked (GlcNAc...) asparagine glycosylation is found at Asn574 and Asn581. The N-linked (GlcNAc...) (high mannose) asparagine glycan is linked to Asn585. The short motif at 629 to 636 (DINKFLWM) is the DK motif element.

The protein belongs to the STT3 family. In terms of assembly, component of the oligosaccharyltransferase (OST) complex. Mg(2+) serves as cofactor. Mn(2+) is required as a cofactor. Expressed preferentially in the root but also in the shoot.

The protein localises to the endoplasmic reticulum membrane. The enzyme catalyses a di-trans,poly-cis-dolichyl diphosphooligosaccharide + L-asparaginyl-[protein] = N(4)-(oligosaccharide-(1-&gt;4)-N-acetyl-beta-D-glucosaminyl-(1-&gt;4)-N-acetyl-beta-D-glucosaminyl)-L-asparaginyl-[protein] + a di-trans,poly-cis-dolichyl diphosphate + H(+). Its pathway is protein modification; protein glycosylation. In terms of biological role, catalytic subunit of the oligosaccharyl transferase (OST) complex that catalyzes the initial transfer of a defined glycan (Glc(3)Man(9)GlcNAc(2) in eukaryotes) from the lipid carrier dolichol-pyrophosphate to an asparagine residue within an Asn-X-Ser/Thr consensus motif in nascent polypeptide chains, the first step in protein N-glycosylation. N-glycosylation occurs cotranslationally and the complex associates with the Sec61 complex at the channel-forming translocon complex that mediates protein translocation across the endoplasmic reticulum (ER). All subunits are required for a maximal enzyme activity. This subunit contains the active site and the acceptor peptide and donor lipid-linked oligosaccharide (LLO) binding pockets. The protein is Dolichyl-diphosphooligosaccharide--protein glycosyltransferase subunit STT3B (STT3B) of Arabidopsis thaliana (Mouse-ear cress).